A 176-amino-acid polypeptide reads, in one-letter code: Small ribosomal subunit protein uS4 (176 aa).

Positions 104-166 constitute an S4 RNA-binding domain; the sequence is RRLQTIVYKK…PTSPFKQNPP (63 aa).

It belongs to the universal ribosomal protein uS4 family. In terms of assembly, part of the 30S ribosomal subunit. Contacts protein S5. The interaction surface between S4 and S5 is involved in control of translational fidelity.

Its function is as follows. One of the primary rRNA binding proteins, it binds directly to 16S rRNA where it nucleates assembly of the body of the 30S subunit. Functionally, with S5 and S12 plays an important role in translational accuracy. This Sulfolobus acidocaldarius (strain ATCC 33909 / DSM 639 / JCM 8929 / NBRC 15157 / NCIMB 11770) protein is Small ribosomal subunit protein uS4 (rps4).